A 274-amino-acid chain; its full sequence is Thiamine kinase (274 aa).

It belongs to the thiamine kinase family.

It carries out the reaction thiamine + ATP = thiamine phosphate + ADP + H(+). Its pathway is cofactor biosynthesis; thiamine diphosphate biosynthesis; thiamine phosphate from thiamine: step 1/1. In terms of biological role, catalyzes the ATP-dependent phosphorylation of thiamine to thiamine phosphate. Is involved in thiamine salvage. This is Thiamine kinase from Salmonella newport (strain SL254).